The sequence spans 391 residues: Putative glutamate--cysteine ligase 2-2 (391 aa).

The protein belongs to the glutamate--cysteine ligase type 2 family. YbdK subfamily.

The enzyme catalyses L-cysteine + L-glutamate + ATP = gamma-L-glutamyl-L-cysteine + ADP + phosphate + H(+). In terms of biological role, ATP-dependent carboxylate-amine ligase which exhibits weak glutamate--cysteine ligase activity. This Saccharopolyspora erythraea (strain ATCC 11635 / DSM 40517 / JCM 4748 / NBRC 13426 / NCIMB 8594 / NRRL 2338) protein is Putative glutamate--cysteine ligase 2-2.